Consider the following 263-residue polypeptide: Chromosomal replication initiator protein DnaA (263 aa).

Aspartate 1 is a region of interest (domain I, interacts with DnaA modulators). A region of interest (domain II) is located at residue aspartate 1. The interval 1–177 (DSGLGKTHLL…GIINKIEFSI (177 aa)) is domain III, AAA+ region. ATP is bound by residues glycine 3, glycine 5, lysine 6, and threonine 7. Residues 178–263 (IQDNSAAPKI…KNYSEIGVAF (86 aa)) are domain IV, binds dsDNA.

Belongs to the DnaA family. As to quaternary structure, oligomerizes as a right-handed, spiral filament on DNA at oriC.

It is found in the cytoplasm. Functionally, plays an essential role in the initiation and regulation of chromosomal replication. ATP-DnaA binds to the origin of replication (oriC) to initiate formation of the DNA replication initiation complex once per cell cycle. Binds the DnaA box (a 9 base pair repeat at the origin) and separates the double-stranded (ds)DNA. Forms a right-handed helical filament on oriC DNA; dsDNA binds to the exterior of the filament while single-stranded (ss)DNA is stabiized in the filament's interior. The ATP-DnaA-oriC complex binds and stabilizes one strand of the AT-rich DNA unwinding element (DUE), permitting loading of DNA polymerase. After initiation quickly degrades to an ADP-DnaA complex that is not apt for DNA replication. Binds acidic phospholipids. In Spiroplasma apis, this protein is Chromosomal replication initiator protein DnaA.